The chain runs to 173 residues: Crossover junction endodeoxyribonuclease RuvC (173 aa).

Catalysis depends on residues Asp-8, Glu-67, and Asp-139. Residues Asp-8, Glu-67, and Asp-139 each coordinate Mg(2+).

Belongs to the RuvC family. In terms of assembly, homodimer which binds Holliday junction (HJ) DNA. The HJ becomes 2-fold symmetrical on binding to RuvC with unstacked arms; it has a different conformation from HJ DNA in complex with RuvA. In the full resolvosome a probable DNA-RuvA(4)-RuvB(12)-RuvC(2) complex forms which resolves the HJ. It depends on Mg(2+) as a cofactor.

The protein localises to the cytoplasm. It catalyses the reaction Endonucleolytic cleavage at a junction such as a reciprocal single-stranded crossover between two homologous DNA duplexes (Holliday junction).. Functionally, the RuvA-RuvB-RuvC complex processes Holliday junction (HJ) DNA during genetic recombination and DNA repair. Endonuclease that resolves HJ intermediates. Cleaves cruciform DNA by making single-stranded nicks across the HJ at symmetrical positions within the homologous arms, yielding a 5'-phosphate and a 3'-hydroxyl group; requires a central core of homology in the junction. The consensus cleavage sequence is 5'-(A/T)TT(C/G)-3'. Cleavage occurs on the 3'-side of the TT dinucleotide at the point of strand exchange. HJ branch migration catalyzed by RuvA-RuvB allows RuvC to scan DNA until it finds its consensus sequence, where it cleaves and resolves the cruciform DNA. In Edwardsiella ictaluri (strain 93-146), this protein is Crossover junction endodeoxyribonuclease RuvC.